The following is a 160-amino-acid chain: CST complex subunit STN1 (160 aa).

The segment at residues 41-133 is a DNA-binding region (OB); that stretch reads VEIVGTIVSR…QITANVAVAE (93 aa).

It belongs to the STN1 family. In terms of assembly, component of the CST complex, composed of CTC1, TEN1 and STN1. Interacts with CTC1. Interacts with TEN1. Interacts with POT1A. In vitro interaction with TEN1 and POT1A is mutually exclusive, indicating that POT1A and TEN1 may compete for the same binding site. As to expression, widely expressed.

It localises to the nucleus. It is found in the chromosome. The protein resides in the telomere. Its function is as follows. Component of the CST complex, a complex that binds to single-stranded DNA and is required to protect telomeres from DNA degradation. The CST complex binds single-stranded DNA with high affinity in a sequence-independent manner, while isolated subunits bind DNA with low affinity by themselves. Associates with enzymatically active telomerase. Plays a genomewide role in DNA replication and facilitates re-replication at non-telomeric loci. The protein is CST complex subunit STN1 of Arabidopsis thaliana (Mouse-ear cress).